The chain runs to 347 residues: NADH-ubiquinone oxidoreductase chain 2 (347 aa).

The next 11 helical transmembrane spans lie at 3–23 (PIIF…VMIS), 25–45 (HWLL…PIMM), 67–87 (SMLL…WTVM), 96–116 (MLMT…FWVP), 122–142 (IPLS…MSVL), 145–165 (IFPS…ILIG), 178–198 (IMAY…PYNP), 200–220 (MTLL…TMFM), 239–259 (IMTV…PLSG), 274–294 (NSII…YFYM), and 325–345 (FLPT…MLSV).

Belongs to the complex I subunit 2 family. In terms of assembly, core subunit of respiratory chain NADH dehydrogenase (Complex I) which is composed of 45 different subunits. Interacts with TMEM242.

It localises to the mitochondrion inner membrane. The catalysed reaction is a ubiquinone + NADH + 5 H(+)(in) = a ubiquinol + NAD(+) + 4 H(+)(out). Functionally, core subunit of the mitochondrial membrane respiratory chain NADH dehydrogenase (Complex I) which catalyzes electron transfer from NADH through the respiratory chain, using ubiquinone as an electron acceptor. Essential for the catalytic activity and assembly of complex I. The chain is NADH-ubiquinone oxidoreductase chain 2 from Bos indicus (Zebu).